The following is a 360-amino-acid chain: SPRY domain-containing SOCS box protein 3 (360 aa).

Residues 21 to 54 (DQDGRSPALHAEEEAWGYDSDGQHSNSDSDTDLL) are disordered. Residues 84 to 274 (SLHPFRQIKS…MKVIRSCCCR (191 aa)) form the B30.2/SPRY domain. Residues 264–315 (SMKVIRSCCCRTSLQYLCCARLRQLLPGSVDSLEVLPLPPGLKQVLSNKLGW) form the SOCS box domain. The disordered stretch occupies residues 322–350 (NRSSQHKGDGSATTSCGSYSDSSCTPGHD). Residues 332-346 (SATTSCGSYSDSSCT) show a composition bias toward polar residues.

The protein belongs to the SPSB family. In terms of assembly, substrate-recognition component of the ECS(SPSB3) complex, composed of spsb3, cul5, elob, elob and rnf7/rbx2.

The protein resides in the nucleus. The protein operates within protein modification; protein ubiquitination. Functionally, substrate-recognition component of a cullin-5-RING E3 ubiquitin-protein ligase complex (ECS complex, also named CRL5 complex), which mediates the ubiquitination and subsequent proteasomal degradation of target proteins. In Xenopus laevis (African clawed frog), this protein is SPRY domain-containing SOCS box protein 3 (spsb3).